The primary structure comprises 208 residues: Uracil phosphoribosyltransferase (208 aa).

5-phospho-alpha-D-ribose 1-diphosphate is bound by residues R78, R103, and 130-138; that span reads DPMLATGGS. Uracil contacts are provided by residues I193 and 198–200; that span reads GDA. D199 serves as a coordination point for 5-phospho-alpha-D-ribose 1-diphosphate.

This sequence belongs to the UPRTase family. Mg(2+) is required as a cofactor.

The catalysed reaction is UMP + diphosphate = 5-phospho-alpha-D-ribose 1-diphosphate + uracil. Its pathway is pyrimidine metabolism; UMP biosynthesis via salvage pathway; UMP from uracil: step 1/1. Allosterically activated by GTP. Catalyzes the conversion of uracil and 5-phospho-alpha-D-ribose 1-diphosphate (PRPP) to UMP and diphosphate. The polypeptide is Uracil phosphoribosyltransferase (Glaesserella parasuis serovar 5 (strain SH0165) (Haemophilus parasuis)).